Consider the following 82-residue polypeptide: U-actitoxin-Oulsp2 (82 aa).

The signal sequence occupies residues 1-21; it reads MNTKLVVVFLLSAILFVSVTA. Positions 22-46 are excised as a propeptide; it reads SRPGKDLERDEAYETYDDERPYFKR. The 35-residue stretch at 48–82 folds into the ShKT domain; sequence CKDNLPAATCSNVKANNNCSSEKYKTNCAKTCGEC. Intrachain disulfides connect Cys-48–Cys-82, Cys-57–Cys-75, and Cys-66–Cys-79. Residues 70 to 71 form a theoritically crucial for binding to potassium channels region; it reads KY.

It belongs to the sea anemone type 1 potassium channel toxin family. Type 1b subfamily.

It is found in the secreted. The protein localises to the nematocyst. Its function is as follows. Probable toxin with unknown function. In contrast to similar toxins, this toxin does not inhibit voltage-gated potassium channels (tested at 100 nM). Does not show antimicrobial activities against bacteria and yeasts. The chain is U-actitoxin-Oulsp2 from Oulactis sp. (Sea anemone).